Here is an 81-residue protein sequence, read N- to C-terminus: Photosystem I iron-sulfur center (81 aa).

2 consecutive 4Fe-4S ferredoxin-type domains span residues 2–31 and 39–68; these read SHAV…MVPW and IAAS…IRVY. Residues Cys11, Cys14, Cys17, Cys21, Cys48, Cys51, Cys54, and Cys58 each contribute to the [4Fe-4S] cluster site.

As to quaternary structure, the cyanobacterial PSI reaction center is composed of one copy each of PsaA,B,C,D,E,F,I,J,K,L,M and X, and forms trimeric complexes. It depends on [4Fe-4S] cluster as a cofactor.

Its subcellular location is the cellular thylakoid membrane. The enzyme catalyses reduced [plastocyanin] + hnu + oxidized [2Fe-2S]-[ferredoxin] = oxidized [plastocyanin] + reduced [2Fe-2S]-[ferredoxin]. In terms of biological role, apoprotein for the two 4Fe-4S centers FA and FB of photosystem I (PSI); essential for photochemical activity. FB is the terminal electron acceptor of PSI, donating electrons to ferredoxin. The C-terminus interacts with PsaA/B/D and helps assemble the protein into the PSI complex. Required for binding of PsaD and PsaE to PSI. PSI is a plastocyanin/cytochrome c6-ferredoxin oxidoreductase, converting photonic excitation into a charge separation, which transfers an electron from the donor P700 chlorophyll pair to the spectroscopically characterized acceptors A0, A1, FX, FA and FB in turn. The sequence is that of Photosystem I iron-sulfur center from Prochlorococcus marinus (strain MIT 9313).